The primary structure comprises 276 residues: ATP synthase subunit a 2 (276 aa).

Helical transmembrane passes span 45 to 65 (AVHVDSLGWSIALGALFVWLF), 105 to 125 (VIAPLALTVFCWIFLMNLMDL), 154 to 173 (VNVTLGMSLSVFFLIIYYSI), 226 to 246 (LLFILIALMPFWAQWALSVPW), and 247 to 267 (AIFHILVIVLQAFIFMMLTIV).

The protein belongs to the ATPase A chain family. In terms of assembly, F-type ATPases have 2 components, CF(1) - the catalytic core - and CF(0) - the membrane proton channel. CF(1) has five subunits: alpha(3), beta(3), gamma(1), delta(1), epsilon(1). CF(0) has three main subunits: a(1), b(2) and c(9-12). The alpha and beta chains form an alternating ring which encloses part of the gamma chain. CF(1) is attached to CF(0) by a central stalk formed by the gamma and epsilon chains, while a peripheral stalk is formed by the delta and b chains.

It is found in the cell inner membrane. In terms of biological role, key component of the proton channel; it plays a direct role in the translocation of protons across the membrane. The sequence is that of ATP synthase subunit a 2 from Hahella chejuensis (strain KCTC 2396).